A 471-amino-acid chain; its full sequence is O-acetyltransferase astG (471 aa).

It belongs to the fumigaclavine B O-acetyltransferase family. Monomer.

It carries out the reaction dideacetyl astellolide A + acetyl-CoA = 14-deacetyl astellolide A + CoA. The enzyme catalyses dideacetyl astellolide B + acetyl-CoA = 14-deacetyl astellolide B + CoA. It participates in secondary metabolite biosynthesis; terpenoid biosynthesis. Its function is as follows. O-acetyltransferase; part of the gene cluster that mediates the biosynthesis of astellolides, drimane-type sesquiterpene esters that show antimicrobial, anti-inflammatory, and anti-tumor activities. The first step in astellolide biosynthesis is performed by the sesquiterpene cyclase astC that catalyzes the formation of drimanyl pyrophosphate from farnesyl pyrophosphate. Drimanyl pyrophosphate is then dephosphorylated by the sesquiterpene phosphatase astI to produce drimanyl monophosphate which is further dephosphorylated to drim-8-ene-11-ol by atsK. Drim-8-ene-11-ol is converted to confertifolin, probably by the cytochrome P450 monooxygenase astD and/or the dehydrogenase astE. The cytochrome P450 monooxygenases astB, astF and astJ then hydroxylate confertifolin at C6, C14, or C15 to form trihydroxy confertifolin. The nonribosomal peptide synthetase astA catalyzes ester bond formation between trihydroxy contifolin and benzoic acid (BA) or 4-hydroxy benzoic acid (4HBA), leading to the formation of dideacetyl astellolides A and B, respectively. Finally, the O-acetyltransferase astG converts dideacetyl astellolides A and B into deacetyl astellolides A and B. The sequence is that of O-acetyltransferase astG from Aspergillus oryzae (strain ATCC 42149 / RIB 40) (Yellow koji mold).